Reading from the N-terminus, the 551-residue chain is Eukaryotic translation initiation factor 3 subunit D-2 (551 aa).

Residues 108-152 (RTRGRTGRGTPNIASLGGSTAGGATASSTKYGKGRHTRNTQNVGR) form a disordered region. The segment covering 115–136 (RGTPNIASLGGSTAGGATASST) has biased composition (low complexity). The interval 290–304 (QFDLLTVNETSVEPP) is RNA gate. A disordered region spans residues 527-551 (PENAFDSDRDEEEESSEPLSNSNDN).

This sequence belongs to the eIF-3 subunit D family. In terms of assembly, component of the eukaryotic translation initiation factor 3 (eIF-3) complex. The eIF-3 complex interacts with pix.

Its subcellular location is the cytoplasm. Its function is as follows. mRNA cap-binding component of the eukaryotic translation initiation factor 3 (eIF-3) complex, which is involved in protein synthesis of a specialized repertoire of mRNAs and, together with other initiation factors, stimulates binding of mRNA and methionyl-tRNAi to the 40S ribosome. The eIF-3 complex specifically targets and initiates translation of a subset of mRNAs involved in cell proliferation. In the eIF-3 complex, eif3d specifically recognizes and binds the 7-methylguanosine cap of a subset of mRNAs. The sequence is that of Eukaryotic translation initiation factor 3 subunit D-2 from Drosophila simulans (Fruit fly).